We begin with the raw amino-acid sequence, 640 residues long: tRNA-dihydrouridine(47) synthase [NAD(P)(+)]-like (640 aa).

Polar residues predominate over residues 1 to 11; that stretch reads MAESEGSNTEN. 2 disordered regions span residues 1-23 and 43-123; these read MAES…ENLD and FIDA…HSQF. A compositionally biased stretch (basic and acidic residues) spans 43–57; the sequence is FIDADGKDVTEKETC. Positions 58-72 are enriched in polar residues; that stretch reads SELSLNDAENTTRTE. A compositionally biased stretch (basic and acidic residues) spans 77–86; sequence PEAKRIKLDD. Positions 104-120 are enriched in basic residues; that stretch reads EKKRARGQNKSRPHMKH. C3H1-type zinc fingers lie at residues 123–153 and 161–191; these read FEEN…HDVA and EDIR…HLGE. Residues 301–303 and Q355 each bind FMN; that span reads PLT. C386 (proton donor) is an active-site residue. FMN contacts are provided by residues K425, H455, 487–489, and 510–511; these read NGD and AR.

This sequence belongs to the Dus family. Dus3 subfamily. FMN is required as a cofactor.

The enzyme catalyses 5,6-dihydrouridine(47) in tRNA + NAD(+) = uridine(47) in tRNA + NADH + H(+). The catalysed reaction is 5,6-dihydrouridine(47) in tRNA + NADP(+) = uridine(47) in tRNA + NADPH + H(+). It carries out the reaction a 5,6-dihydrouridine in mRNA + NAD(+) = a uridine in mRNA + NADH + H(+). It catalyses the reaction a 5,6-dihydrouridine in mRNA + NADP(+) = a uridine in mRNA + NADPH + H(+). Functionally, catalyzes the synthesis of dihydrouridine, a modified base, in various RNAs, such as tRNAs, mRNAs and some long non-coding RNAs (lncRNAs). Mainly modifies the uridine in position 47 (U47) in the D-loop of most cytoplasmic tRNAs. Also able to mediate the formation of dihydrouridine in some mRNAs, thereby regulating their translation. This Xenopus laevis (African clawed frog) protein is tRNA-dihydrouridine(47) synthase [NAD(P)(+)]-like (dus3l).